The primary structure comprises 651 residues: Probable potassium transport system protein Kup (651 aa).

A run of 12 helical transmembrane segments spans residues 41–61 (LVLGALGVVYGDIGTSPIYAF), 82–102 (VVSLIFWALTLVVTVKYVLFV), 130–150 (LILGVGICGAALFFGDAVITP), 163–183 (IVAPNLTPFVVPAAVVILVTL), 194–214 (VAIVFGPIMALWFVALGASGL), 235–255 (FLTVSPAVAFVTVGAVFLAMT), 276–296 (WLWIVFPCLLLNYFGQAAFIL), 309–329 (MIPSFALWPMVLLATAATVIA), 366–386 (IYIPRVNLLLGLAVVILVLGF), 395–415 (AYGIAVTGNMLVTTVLLYIAM), 426–446 (ALPIILGFLVIDMLFFSANII), and 450–470 (EGGWASIGIATVLVLIMWTWV).

It belongs to the HAK/KUP transporter (TC 2.A.72) family.

Its subcellular location is the cell inner membrane. It carries out the reaction K(+)(in) + H(+)(in) = K(+)(out) + H(+)(out). Functionally, transport of potassium into the cell. Likely operates as a K(+):H(+) symporter. The polypeptide is Probable potassium transport system protein Kup (Brucella abortus (strain S19)).